The following is a 404-amino-acid chain: Putative replication protein C (404 aa).

The disordered stretch occupies residues 249–287 (PDQIERHKQNSHPESTNEFEPSSREEQGERPSPAIEPQR).

It to A.rhizogenes possible replication protein C (RepC).

This Sinorhizobium fredii (strain NBRC 101917 / NGR234) protein is Putative replication protein C.